Here is a 280-residue protein sequence, read N- to C-terminus: tRNA pseudouridine synthase A (280 aa).

Aspartate 60 acts as the Nucleophile in catalysis. Tyrosine 119 is a substrate binding site.

Belongs to the tRNA pseudouridine synthase TruA family. In terms of assembly, homodimer.

The enzyme catalyses uridine(38/39/40) in tRNA = pseudouridine(38/39/40) in tRNA. Formation of pseudouridine at positions 38, 39 and 40 in the anticodon stem and loop of transfer RNAs. In Treponema pallidum (strain Nichols), this protein is tRNA pseudouridine synthase A.